The chain runs to 23 residues: Basic phospholipase A2 intermexin (23 aa).

The protein belongs to the phospholipase A2 family. Group II subfamily. Ca(2+) serves as cofactor. Contains 7 disulfide bonds. Expressed by the venom gland.

The protein localises to the secreted. It carries out the reaction a 1,2-diacyl-sn-glycero-3-phosphocholine + H2O = a 1-acyl-sn-glycero-3-phosphocholine + a fatty acid + H(+). In terms of biological role, snake venom phospholipase A2 (PLA2) that shows presynaptic neurotoxicity and low myotoxicity. PLA2 catalyzes the calcium-dependent hydrolysis of the 2-acyl groups in 3-sn-phosphoglycerides. The chain is Basic phospholipase A2 intermexin from Gloydius intermedius (Central Asian pit viper).